We begin with the raw amino-acid sequence, 853 residues long: MAEIETRGPEVFSRMPKGGIGAEKLQRLLRRKHGCTGKVPIYLIHPTVNSLLSLDLISHPAKWSPNAQGLDLHLTSMKKHFTAYCLADVLEILKPLTKDFQSSKFNVMEVLYFEEKEDLTKFIEMTFVEEINKAKANVGFDDRIDIIGNMFITAIKYHLALGFTPTIPTEDFYVEMSWKPDPSFNQIEKVMDYYCWMFERAFDRLGLMTMDEIVHDLMITDKNGVRSVSTITTKRDVVPLDFTKTFNFLGTLFIGNVSQLALIIPDEIKLIFAEKESKNLLLERLSKNIVVVSTELTKEASNAITNIMRNDVRTDEDFKEAAKKREESEKRMNKMLENRLKVALNDTSENSDPFDVDKFGKNMLKNVEAELKMSTNIQNLLASNNVTATKTAIDLDDVHNLAIKSTEYVDTMTGHMPSGSYIPGSKKGIQNEKERKQIQKTLQGQKLNENLDIVVKMLKSKITENELATNKITEMMITHEGQVKMIDELKRNIKLLIEKMTLIEKEVKKEKKENEKLLKDMKISSELIANVSQQLHLSEEDRKRLIDLSASMKDCGEDPLPIQQKLDKATTSLVQLFGSYNTKNGDTIAKRNAELKRTRMAYDQVLSAECVRPISTFIGVRTMQEMQRSNVWMIEKWMGDREVNDAIYAKEKTMVTGEEINYTSGETDENIIQENAEISFIDLNPITKERARTMKTFFNRTEVTEPDKIFDRHYMTIQFKLKGDIDLVMGKPLSQKWDMFYNTNFRLKRDIYTKVGNKLQPKLTEESLILYGKEFFRIMGGEIEGMDRSKIERVMNIVTSIEDVVDVSKMGVSETMIMEMFKIPIFMTVNKLYSALRRRTGIDDIASSNILKK.

2 coiled-coil regions span residues 313–343 and 480–528; these read RTDE…LKVA and EGQV…SELI.

This is an uncharacterized protein from Ostreid herpesvirus 1 (isolate France) (OsHV-1).